The sequence spans 336 residues: tRNA N6-adenosine threonylcarbamoyltransferase (336 aa).

Fe cation contacts are provided by H111, H115, and Y132. Substrate-binding positions include 132–136 (YLSGG), D164, D185, and S264. D292 is a Fe cation binding site.

Belongs to the KAE1 / TsaD family. Fe(2+) serves as cofactor.

It localises to the cytoplasm. It catalyses the reaction L-threonylcarbamoyladenylate + adenosine(37) in tRNA = N(6)-L-threonylcarbamoyladenosine(37) in tRNA + AMP + H(+). Required for the formation of a threonylcarbamoyl group on adenosine at position 37 (t(6)A37) in tRNAs that read codons beginning with adenine. Is probably involved in the transfer of the threonylcarbamoyl moiety of threonylcarbamoyl-AMP (TC-AMP) to the N6 group of A37. The polypeptide is tRNA N6-adenosine threonylcarbamoyltransferase (Sulfurisphaera tokodaii (strain DSM 16993 / JCM 10545 / NBRC 100140 / 7) (Sulfolobus tokodaii)).